The primary structure comprises 72 residues: Large ribosomal subunit protein bL31 (72 aa).

Zn(2+) contacts are provided by Cys-16, Cys-18, Cys-38, and Cys-41.

This sequence belongs to the bacterial ribosomal protein bL31 family. Type A subfamily. In terms of assembly, part of the 50S ribosomal subunit. It depends on Zn(2+) as a cofactor.

Its function is as follows. Binds the 23S rRNA. The polypeptide is Large ribosomal subunit protein bL31 (Aliivibrio salmonicida (strain LFI1238) (Vibrio salmonicida (strain LFI1238))).